The sequence spans 368 residues: Endophilin-A2 (368 aa).

A membrane-binding amphipathic helix region spans residues 1–21 (MSVAGLKKQFYKASQLVSEKV). The BAR domain maps to 18–249 (SEKVGGAEGT…LKRRMREASS (232 aa)). A required for dimerization upon membrane association region spans residues 60–87 (PNPASRAKLTMLNTVSKIRGQVKNPGYP). Positions 181–250 (EELRQAMEKF…KRRMREASSR (70 aa)) form a coiled coil. Residues 218–254 (LVDAQLDYHRQAVQILDELADKLKRRMREASSRPKRE) form an interaction with ARC region. The disordered stretch occupies residues 243–308 (RMREASSRPK…PSRSMPPLDQ (66 aa)). Residues 245-263 (REASSRPKREYKPKPRELL) are compositionally biased toward basic and acidic residues. Phosphoserine is present on residues Ser288 and Ser292. Phosphothreonine is present on Thr298. In terms of domain architecture, SH3 spans 306–365 (LDQPSCKALYDFEPENDGELGFHEGDIITLTNQIDENWYEGMLDGQSGFFPLSYVEVLVP). Phosphotyrosine is present on Tyr315.

It belongs to the endophilin family. In terms of assembly, interacts with ARC, SYNJ1 and DNM1. Interacts with PDCD6IP. Interacts with BIN2.

It is found in the cytoplasm. Its subcellular location is the early endosome membrane. The protein localises to the cell projection. The protein resides in the podosome. Implicated in endocytosis. May recruit other proteins to membranes with high curvature. The chain is Endophilin-A2 from Bos taurus (Bovine).